Here is a 375-residue protein sequence, read N- to C-terminus: Lipid-A-disaccharide synthase (375 aa).

This sequence belongs to the LpxB family.

It carries out the reaction a lipid X + a UDP-2-N,3-O-bis[(3R)-3-hydroxyacyl]-alpha-D-glucosamine = a lipid A disaccharide + UDP + H(+). It functions in the pathway bacterial outer membrane biogenesis; LPS lipid A biosynthesis. Its function is as follows. Condensation of UDP-2,3-diacylglucosamine and 2,3-diacylglucosamine-1-phosphate to form lipid A disaccharide, a precursor of lipid A, a phosphorylated glycolipid that anchors the lipopolysaccharide to the outer membrane of the cell. The protein is Lipid-A-disaccharide synthase of Pseudomonas putida (strain GB-1).